We begin with the raw amino-acid sequence, 37 residues long: Cytochrome b6-f complex subunit 5 (37 aa).

A helical transmembrane segment spans residues 5 to 25 (LLSGIVLGLVPVTITGLFVAA).

The protein belongs to the PetG family. In terms of assembly, the 4 large subunits of the cytochrome b6-f complex are cytochrome b6, subunit IV (17 kDa polypeptide, PetD), cytochrome f and the Rieske protein, while the 4 small subunits are PetG, PetL, PetM and PetN. The complex functions as a dimer.

Its subcellular location is the plastid. The protein localises to the chloroplast thylakoid membrane. Component of the cytochrome b6-f complex, which mediates electron transfer between photosystem II (PSII) and photosystem I (PSI), cyclic electron flow around PSI, and state transitions. PetG is required for either the stability or assembly of the cytochrome b6-f complex. In Emiliania huxleyi (Coccolithophore), this protein is Cytochrome b6-f complex subunit 5.